The sequence spans 124 residues: Small ribosomal subunit protein uS12 (124 aa).

Residues 1 to 30 (MPTIQQLVRKGRQDKVAKTKTAALKGSPQR) are disordered. Residue Asp-89 is modified to 3-methylthioaspartic acid. A disordered region spans residues 102 to 124 (ADTQGVKNRKQARSRYGAKKEKS). Basic residues predominate over residues 108–118 (KNRKQARSRYG).

The protein belongs to the universal ribosomal protein uS12 family. In terms of assembly, part of the 30S ribosomal subunit. Contacts proteins S8 and S17. May interact with IF1 in the 30S initiation complex.

Functionally, with S4 and S5 plays an important role in translational accuracy. Its function is as follows. Interacts with and stabilizes bases of the 16S rRNA that are involved in tRNA selection in the A site and with the mRNA backbone. Located at the interface of the 30S and 50S subunits, it traverses the body of the 30S subunit contacting proteins on the other side and probably holding the rRNA structure together. The combined cluster of proteins S8, S12 and S17 appears to hold together the shoulder and platform of the 30S subunit. This Saccharopolyspora erythraea (strain ATCC 11635 / DSM 40517 / JCM 4748 / NBRC 13426 / NCIMB 8594 / NRRL 2338) protein is Small ribosomal subunit protein uS12.